The chain runs to 208 residues: Imidazoleglycerol-phosphate dehydratase (208 aa).

It belongs to the imidazoleglycerol-phosphate dehydratase family.

The enzyme catalyses D-erythro-1-(imidazol-4-yl)glycerol 3-phosphate = 3-(imidazol-4-yl)-2-oxopropyl phosphate + H2O. It participates in amino-acid biosynthesis; L-histidine biosynthesis; L-histidine from 5-phospho-alpha-D-ribose 1-diphosphate: step 6/9. In Trichoderma harzianum (Hypocrea lixii), this protein is Imidazoleglycerol-phosphate dehydratase (his3).